The sequence spans 482 residues: Aspartic proteinase 36 (482 aa).

The signal sequence occupies residues 1–27 (MVTTMDPSRISRIVAVVFVLVIQVVSG). Asn-32 is a glycosylation site (N-linked (GlcNAc...) asparagine). The Peptidase A1 domain occupies 78–429 (YFTKIKLGSP…DLENEVIGWA (352 aa)). The active site involves Asp-96. 3 N-linked (GlcNAc...) asparagine glycosylation sites follow: Asn-178, Asn-204, and Asn-226. Asp-310 is an active-site residue. Cys-347 and Cys-388 are joined by a disulfide. N-linked (GlcNAc...) asparagine glycosylation is present at Asn-432. Ser-456 carries GPI-anchor amidated serine lipidation. Residues 457–482 (AASSVMNGTLVTLLSILIWVFHSFTS) constitute a propeptide, removed in mature form. An N-linked (GlcNAc...) asparagine glycan is attached at Asn-463.

Belongs to the peptidase A1 family. Highly expressed in pollen and pollen tubes. Mostly expressed in roots, flowers and inflorescence, and at lower levels in stems, seedlings and siliques.

It localises to the cell membrane. The protein resides in the cytoplasm. The protein localises to the cytosol. Displays aspartic proteolytic activity. Together with A39, contributes to pollen and ovule development, including the apical cell wall constitution of the growing pollen tubes. The protein is Aspartic proteinase 36 of Arabidopsis thaliana (Mouse-ear cress).